The chain runs to 82 residues: Translational regulator CsrA (82 aa).

This sequence belongs to the CsrA/RsmA family. Homodimer; the beta-strands of each monomer intercalate to form a hydrophobic core, while the alpha-helices form wings that extend away from the core.

The protein localises to the cytoplasm. A translational regulator that binds mRNA to regulate translation initiation and/or mRNA stability. Usually binds in the 5'-UTR at or near the Shine-Dalgarno sequence preventing ribosome-binding, thus repressing translation. Its main target seems to be the major flagellin gene, while its function is anatagonized by FliW. The sequence is that of Translational regulator CsrA from Geobacillus kaustophilus (strain HTA426).